Reading from the N-terminus, the 818-residue chain is Protocadherin beta-1 (818 aa).

The signal sequence occupies residues 1–28; it reads MAGTRRKSLQNRQVGSLLIFLCISVGDA. At 29 to 691 the chain is on the extracellular side; the sequence is TTIRYSVAEE…RKVNPSTKYL (663 aa). Cadherin domains are found at residues 35 to 133, 138 to 242, 243 to 347, 348 to 452, and 457 to 562; these read VAEE…APVF, PLLK…VPQF, SRLV…PPEV, MVSS…PPIF, and YILT…RPMI. Asn169, Asn209, Asn257, and Asn419 each carry an N-linked (GlcNAc...) asparagine glycan. A glycan (N-linked (GlcNAc...) asparagine) is linked at Asn568. Residues 577–672 form the Cadherin 6 domain; it reads VPRSAEAGYL…LVDGFSEPYL (96 aa). The chain crosses the membrane as a helical span at residues 692 to 712; that stretch reads VISLVILSFLFLLSVIVIFII. Over 713 to 818 the chain is Cytoplasmic; sequence HVYQKIKYRE…GHDQVSDDYM (106 aa). The segment at 789–818 is disordered; sequence MEAGSSLPPNSDRNKSQRLEGHDQVSDDYM. The segment covering 800 to 818 has biased composition (basic and acidic residues); sequence DRNKSQRLEGHDQVSDDYM.

The protein resides in the cell membrane. In terms of biological role, potential calcium-dependent cell-adhesion protein. May be involved in the establishment and maintenance of specific neuronal connections in the brain. This Homo sapiens (Human) protein is Protocadherin beta-1 (PCDHB1).